The sequence spans 730 residues: Pentatricopeptide repeat-containing protein At5g64320, mitochondrial (730 aa).

Residues 1–18 (MVMLARSKLALDVSRRSQ) constitute a mitochondrion transit peptide. PPR repeat units follow at residues 110-144 (SFDV…GIVF), 145-175 (KESL…MRNV), 181-215 (TFKS…KIPP), 216-250 (TLFT…GCVP), 251-285 (NSVI…GCVP), 286-320 (DAET…GFAP), 321-351 (DDIT…IPKP), 352-387 (EIVI…GIVP), 388-422 (DVCT…GCKP), 423-457 (NVYS…GLKP), 458-492 (NTVG…GCKP), 493-527 (DVYT…GVVA), 528-562 (NTVT…GSPL), 563-597 (DEIT…GHAP), 598-632 (SNIS…GSTP), 633-667 (DIVT…GIPP), and 668-702 (DTVT…GFVP).

This sequence belongs to the PPR family. P subfamily.

The protein resides in the mitochondrion. This is Pentatricopeptide repeat-containing protein At5g64320, mitochondrial from Arabidopsis thaliana (Mouse-ear cress).